A 250-amino-acid chain; its full sequence is Probable replication-associated protein repA2 (250 aa).

Belongs to the IncFII RepA family.

Functionally, this protein is essential for plasmid replication; it is involved in copy control functions. The protein is Probable replication-associated protein repA2 (repA2) of Buchnera aphidicola subsp. Acyrthosiphon pisum (strain APS) (Acyrthosiphon pisum symbiotic bacterium).